The following is a 313-amino-acid chain: Mitochondrial uncoupling protein 5 (313 aa).

Solcar repeat units follow at residues 4–108, 117–208, and 217–307; these read KGFA…IKGE, MPLM…VKET, and DGLG…VKKL. Transmembrane regions (helical) follow at residues 6 to 26, 77 to 97, 123 to 143, 182 to 202, 223 to 243, and 280 to 300; these read FAEGGIASIVAGCSTHPLDLI, MRALFSGVSATVLRQTLYSTT, IGAGAIAGAIGAAVGNPADVA, RGSSLTINRAMLVTSSQLASY, VSASFAAGFVASVASNPVDVI, and YKGFIPTVSRQAPFTVVLFVT.

It belongs to the mitochondrial carrier (TC 2.A.29) family. In terms of tissue distribution, expressed in roots, leaves, stems and flowers.

It localises to the mitochondrion inner membrane. Its function is as follows. PUMPS are mitochondrial transporter proteins that create proton leaks across the inner mitochondrial membrane, thus uncoupling oxidative phosphorylation. This leads to a decrease in the efficiency of oxidative phosphorylation and an increase in heat production. May be involved in protecting plant cells against oxidative stress damage. Recombinant PUMP5, reconstituted into liposomes, transports a wide range of dicarboxylic acids including malate, oxaloacetate and succinate as well as phosphate, sulfate and thiosulfate. However, it is unknown if these transports are of any biological significance in vivo. This is Mitochondrial uncoupling protein 5 (PUMP5) from Arabidopsis thaliana (Mouse-ear cress).